The following is a 422-amino-acid chain: Tyrosine--tRNA ligase 1 (422 aa).

Tyr35 contributes to the L-tyrosine binding site. The 'HIGH' region motif lies at 40 to 49 (PTADSLHIGH). L-tyrosine-binding residues include Tyr170 and Gln174. A 'KMSKS' region motif is present at residues 232–236 (KFGKT). ATP is bound at residue Lys235. The S4 RNA-binding domain maps to 355–421 (LSLVDVLVQS…GKKKYFLVTY (67 aa)).

Belongs to the class-I aminoacyl-tRNA synthetase family. TyrS type 1 subfamily. Homodimer.

The protein resides in the cytoplasm. It carries out the reaction tRNA(Tyr) + L-tyrosine + ATP = L-tyrosyl-tRNA(Tyr) + AMP + diphosphate + H(+). Catalyzes the attachment of tyrosine to tRNA(Tyr) in a two-step reaction: tyrosine is first activated by ATP to form Tyr-AMP and then transferred to the acceptor end of tRNA(Tyr). This Bacillus subtilis (strain 168) protein is Tyrosine--tRNA ligase 1.